Here is a 229-residue protein sequence, read N- to C-terminus: MYDISKWKHVFKLDPNKELSDEHLEMICESGTDAVIVGGSDGITIDNVLHMLVSIRRYAVPCVLEVSDVEAITPGFDFYYIPSVLNSRKVEWVTGVHHEALKEFGDIMDWDEIYMEGYCVLNPEAKVAQLTDAKCDLTEDDVIAYARLADKLLHLPIFYLEYSGTYGDIELVKNVKAELKQAKLYYGGGISNAEQAKEMAQYADTVVVGNIIYDDIKSALKTVKAVKGE.

Residue K12 participates in sn-glycerol 1-phosphate binding. The Mg(2+) site is built by D14 and S40. Residues 159–164 (YLEYSG), G189, and 209–210 (GN) each bind sn-glycerol 1-phosphate.

It belongs to the GGGP/HepGP synthase family. Group I subfamily. In terms of assembly, homodimer. Mg(2+) is required as a cofactor.

It carries out the reaction sn-glycerol 1-phosphate + all-trans-heptaprenyl diphosphate = 3-heptaprenyl-sn-glycero-1-phosphate + diphosphate. Its pathway is membrane lipid metabolism; glycerophospholipid metabolism. Functionally, prenyltransferase that catalyzes in vivo the transfer of the heptaprenyl moiety of heptaprenyl pyrophosphate (HepPP; 35 carbon atoms) to the C3 hydroxyl of sn-glycerol-1-phosphate (G1P), producing heptaprenylglyceryl phosphate (HepGP). This reaction is an ether-bond-formation step in the biosynthesis of archaea-type G1P-based membrane lipids found in Bacillales. The sequence is that of Heptaprenylglyceryl phosphate synthase from Bacillus mycoides (strain KBAB4) (Bacillus weihenstephanensis).